We begin with the raw amino-acid sequence, 636 residues long: Asparagine synthetase domain-containing protein 1 (636 aa).

The active-site Nucleophile is cysteine 2. In terms of domain architecture, Glutamine amidotransferase type-2 spans 2 to 187 (CGICCVVALS…ASGIFKMDLR (186 aa)). The Asparagine synthetase domain occupies 291–607 (QFIDVLDEAV…GLEAASILPK (317 aa)).

The polypeptide is Asparagine synthetase domain-containing protein 1 (ASNSD1) (Gallus gallus (Chicken)).